Consider the following 330-residue polypeptide: Protein FAM170A (330 aa).

3 disordered regions span residues 1–54, 76–104, and 169–218; these read MKRR…VTST, HRDSPQPQSPLAQVQERGETPPRSQHVSL, and VGTP…AKTP. Residues 174–185 are compositionally biased toward polar residues; sequence SDVSTRNLLSDS. Positions 189–200 are enriched in basic and acidic residues; it reads GEEKEHEERTES. The residue at position 217 (Thr-217) is a Phosphothreonine. The segment at 228 to 252 adopts a C2H2-type; degenerate zinc-finger fold; the sequence is FRCMACCRVFTTMEALQEHVQFGIR. A disordered region spans residues 270–330; it reads NMESESTQDE…VFHSPKDRNS (61 aa). Residues 275-293 are compositionally biased toward acidic residues; the sequence is STQDEQEEENGNEKEEEEK. Ser-315 is modified (phosphoserine).

This sequence belongs to the FAM170 family. In terms of tissue distribution, expressed strongly in testis and brain and weakly in prostate, spleen, pancreas and uterus.

It localises to the nucleus. In terms of biological role, acts as a nuclear transcription factor that positively regulates the expression of heat shock genes. Binds to heat shock promoter elements (HSE). The chain is Protein FAM170A (FAM170A) from Homo sapiens (Human).